Reading from the N-terminus, the 142-residue chain is Chorion class A protein Ld12 (142 aa).

An N-terminal signal peptide occupies residues 1-18 (MNSFALLLVCIQACLVQS).

The protein belongs to the chorion protein family.

Its function is as follows. This protein is one of many from the eggshell of the gypsy moth. This Lymantria dispar (Gypsy moth) protein is Chorion class A protein Ld12.